The following is a 734-amino-acid chain: Photosystem I P700 chlorophyll a apoprotein A2 (734 aa).

Helical transmembrane passes span Ile-46 to Ala-69, Leu-135 to Gln-158, Leu-175 to Ile-199, Ile-273 to Tyr-291, Leu-330 to Tyr-353, Ala-369 to Ile-395, Ala-417 to His-439, and Phe-517 to Val-535. Residues Cys-559 and Cys-568 each contribute to the [4Fe-4S] cluster site. A run of 2 helical transmembrane segments spans residues Ala-575–Trp-596 and Leu-643–Ile-665. Residues His-654, Met-662, and Tyr-670 each contribute to the chlorophyll a site. A phylloquinone-binding site is contributed by Trp-671. A helical membrane pass occupies residues Val-707–Ala-727.

Belongs to the PsaA/PsaB family. As to quaternary structure, the PsaA/B heterodimer binds the P700 chlorophyll special pair and subsequent electron acceptors. PSI consists of a core antenna complex that captures photons, and an electron transfer chain that converts photonic excitation into a charge separation. The eukaryotic PSI reaction center is composed of at least 11 subunits. Requires P700 is a chlorophyll a/chlorophyll a' dimer, A0 is one or more chlorophyll a, A1 is one or both phylloquinones and FX is a shared 4Fe-4S iron-sulfur center. as cofactor.

It is found in the plastid. The protein localises to the chloroplast thylakoid membrane. It catalyses the reaction reduced [plastocyanin] + hnu + oxidized [2Fe-2S]-[ferredoxin] = oxidized [plastocyanin] + reduced [2Fe-2S]-[ferredoxin]. PsaA and PsaB bind P700, the primary electron donor of photosystem I (PSI), as well as the electron acceptors A0, A1 and FX. PSI is a plastocyanin-ferredoxin oxidoreductase, converting photonic excitation into a charge separation, which transfers an electron from the donor P700 chlorophyll pair to the spectroscopically characterized acceptors A0, A1, FX, FA and FB in turn. Oxidized P700 is reduced on the lumenal side of the thylakoid membrane by plastocyanin. In Mesostigma viride (Green alga), this protein is Photosystem I P700 chlorophyll a apoprotein A2.